A 595-amino-acid chain; its full sequence is Probable L-gulonolactone oxidase 1 (595 aa).

Positions 1–18 are cleaved as a signal peptide; the sequence is MAFWLSLIFFCFCTFASS. The FAD-binding PCMH-type domain maps to 47–229; that stretch reads SICEAAKVEY…SQVTFQLQPM (183 aa).

Belongs to the oxygen-dependent FAD-linked oxidoreductase family. It depends on FAD as a cofactor.

The enzyme catalyses L-gulono-1,4-lactone + O2 = L-ascorbate + H2O2 + H(+). It functions in the pathway cofactor biosynthesis; L-ascorbate biosynthesis. Its function is as follows. May be involved in the biosynthesis of ascorbic acid. This chain is Probable L-gulonolactone oxidase 1, found in Arabidopsis thaliana (Mouse-ear cress).